The sequence spans 163 residues: Retinoic acid receptor responder protein 2 (163 aa).

Residues 1 to 20 (MKYLLISLALWLGMVGIHGT) form the signal peptide. Cystine bridges form between Cys-79–Cys-89, Cys-100–Cys-119, and Cys-103–Cys-135. The propeptide occupies 158–163 (RALKHK).

In terms of processing, secreted in an inactive precursor form, prochemerin, which is proteolytically processed by a variety of extracellular proteases to generate forms with differing levels of bioactivity. For example, the removal of six amino acids results in chemerin-157, which exhibits the highest activity, while removal of seven amino acids results in chemerin-156 which has slightly less activity. Some proteases are able to cleave at more than one site and chemerin forms may be sequentially processed by different enzymes to modulate activity levels. The coordinated expression and activity of chemerin-modifying enzymes is essential for regulating its bioactivation, inactivation and, consequently, biological function. Cathepsin G cleaves seven C-terminal amino acids from prochemerin (chemerin-156), elastase is able to cleave six (chemerin-157), eight (chemerin-155) or eleven (chemerin-152), plasmin cleaves five amino acids (chemerin-158), and tryptase cleaves five (chemerin-158) or eight (chemerin-155). Multiple cleavages might be required to fully activate chemerin, with an initial tryptase cleavage resulting in chemerin with low activity (chemerin-158), and a second cleavage by carboxypeptidase N or B producing highly active chemerin (chemerin-157).

The protein resides in the secreted. In terms of biological role, adipocyte-secreted protein (adipokine) that regulates adipogenesis, metabolism and inflammation through activation of the chemokine-like receptor 1 (CMKLR1). Also acts as a ligand for CMKLR2. Can also bind to C-C chemokine receptor-like 2 (CCRL2), but with a lower affinity than it does to CMKLR1 or CMKLR2. Positively regulates adipocyte differentiation, modulates the expression of adipocyte genes involved in lipid and glucose metabolism and might play a role in angiogenesis, a process essential for the expansion of white adipose tissue. Also acts as a pro-inflammatory adipokine, causing an increase in secretion of pro-inflammatory and prodiabetic adipokines, which further impair adipose tissue metabolic function and have negative systemic effects including impaired insulin sensitivity, altered glucose and lipid metabolism, and a decrease in vascular function in other tissues. Can have both pro- and anti-inflammatory properties depending on the modality of enzymatic cleavage by different classes of proteases. Acts as a chemotactic factor for leukocyte populations expressing CMKLR1, particularly immature plasmacytoid dendritic cells, but also immature myeloid DCs, macrophages and natural killer cells. Exerts an anti-inflammatory role by preventing TNF/TNFA-induced VCAM1 expression and monocytes adhesion in vascular endothelial cells. The effect is mediated via inhibiting activation of NF-kappa-B and CRK/p38 through stimulation of AKT1/NOS3 signaling and nitric oxide production. Its dual role in inflammation and metabolism might provide a link Exhibits an antimicrobial function in the skin. The polypeptide is Retinoic acid receptor responder protein 2 (RARRES2) (Cricetulus griseus (Chinese hamster)).